Consider the following 709-residue polypeptide: Frizzled-6 (709 aa).

Residues 1–18 form the signal peptide; the sequence is MERSPFLLACILLPLVRG. The FZ domain occupies 19–132; that stretch reads HSLFTCEPIT…CNRLPHCDDT (114 aa). Residues 19 to 201 lie on the Extracellular side of the membrane; the sequence is HSLFTCEPIT…SDELDFAKSF (183 aa). 5 cysteine pairs are disulfide-bonded: Cys24–Cys85, Cys32–Cys78, Cys69–Cys106, Cys95–Cys129, and Cys99–Cys123. Asn38 carries an N-linked (GlcNAc...) asparagine glycan. The helical transmembrane segment at 202–222 threads the bilayer; sequence IGIVSIFCLCATLFTFLTFLI. The Cytoplasmic portion of the chain corresponds to 223-233; the sequence is DVRRFRYPERP. The chain crosses the membrane as a helical span at residues 234-254; the sequence is IIYYSVCYSIVSLMYFVGFLL. At 255-284 the chain is on the extracellular side; sequence GNSTACNKADEKLELGDTVVLGSKNKACSV. Asn256 carries N-linked (GlcNAc...) asparagine glycosylation. A helical membrane pass occupies residues 285–305; it reads VFMFLYFFTMAGTVWWVILTI. Over 306–324 the chain is Cytoplasmic; that stretch reads TWFLAAGRKWSCEAIEQKA. The helical transmembrane segment at 325–345 threads the bilayer; that stretch reads VWFHAVAWGAPGFLTVMLLAM. Topologically, residues 346 to 370 are extracellular; that stretch reads NKVEGDNISGVCFVGLYDLDASRYF. Asn352 is a glycosylation site (N-linked (GlcNAc...) asparagine). Residues 371–391 form a helical membrane-spanning segment; sequence VLLPLCLCVFVGLSLLLAGII. The Cytoplasmic segment spans residues 392-416; that stretch reads SLNHVRQVIQHDGRNQEKLKKFMIR. The chain crosses the membrane as a helical span at residues 417-437; it reads IGVFSGLYLVPLVTLLGCYVY. Topologically, residues 438 to 473 are extracellular; it reads ELVNRITWEMTWFSDHCHQYRIPCPYQANPKARPEL. Residues 474–494 traverse the membrane as a helical segment; that stretch reads ALFMIKYLMTLIVGISAVFWV. Topologically, residues 495-709 are cytoplasmic; it reads GSKKTCTEWA…EQGAGSHSDA (215 aa). The Lys-Thr-X-X-X-Trp motif, mediates interaction with the PDZ domain of Dvl family members motif lies at 498–503; that stretch reads KTCTEW. Positions 583 to 594 are enriched in polar residues; the sequence is QETSTEVHTSPE. The tract at residues 583–709 is disordered; it reads QETSTEVHTS…EQGAGSHSDA (127 aa). The segment covering 596–616 has biased composition (basic and acidic residues); the sequence is SVKEGRADRANTPSAKDRDCG. Residues 620 to 629 show a composition bias toward polar residues; the sequence is GPSSKLSGNR. Over residues 630–644 the composition is skewed to basic and acidic residues; the sequence is NGRESRAGGLKERSN. At Ser656 the chain carries Phosphoserine. The span at 669 to 690 shows a compositional bias: polar residues; that stretch reads CSTSQAASSPEPTSLKGSTSLP. A compositionally biased stretch (basic and acidic residues) spans 697 to 709; sequence ARKEQGAGSHSDA.

The protein belongs to the G-protein coupled receptor Fz/Smo family. In terms of assembly, interacts with LMBR1L. Post-translationally, ubiquitinated by ZNRF3, leading to its degradation by the proteasome. As to expression, expressed in both hair cells and supporting cells in the utricle, saccule, cristae and the organ of Corti in the inner ear (at protein level).

Its subcellular location is the membrane. The protein resides in the cell membrane. The protein localises to the cell surface. It is found in the apical cell membrane. It localises to the cytoplasmic vesicle membrane. Its subcellular location is the endoplasmic reticulum membrane. Functionally, receptor for Wnt proteins. Most of frizzled receptors are coupled to the beta-catenin canonical signaling pathway, which leads to the activation of disheveled proteins, inhibition of GSK-3 kinase, nuclear accumulation of beta-catenin and activation of Wnt target genes. A second signaling pathway involving PKC and calcium fluxes has been seen for some family members, but it is not yet clear if it represents a distinct pathway or if it can be integrated in the canonical pathway, as PKC seems to be required for Wnt-mediated inactivation of GSK-3 kinase. Both pathways seem to involve interactions with G-proteins. Activation by Wnt5A stimulates PKC activity via a G-protein-dependent mechanism. Involved in transduction and intercellular transmission of polarity information during tissue morphogenesis and/or in differentiated tissues. Together with FZD3, is involved in the neural tube closure and plays a role in the regulation of the establishment of planar cell polarity (PCP), particularly in the orientation of asymmetric bundles of stereocilia on the apical faces of a subset of auditory and vestibular sensory cells located in the inner ear. The sequence is that of Frizzled-6 (Fzd6) from Mus musculus (Mouse).